Consider the following 424-residue polypeptide: Glutamyl-tRNA reductase (424 aa).

Residues 49–52 (TCNR), Ser107, 112–114 (EPQ), and Gln118 contribute to the substrate site. Cys50 (nucleophile) is an active-site residue. 187-192 (GAGETI) contacts NADP(+).

This sequence belongs to the glutamyl-tRNA reductase family. Homodimer.

It carries out the reaction (S)-4-amino-5-oxopentanoate + tRNA(Glu) + NADP(+) = L-glutamyl-tRNA(Glu) + NADPH + H(+). Its pathway is porphyrin-containing compound metabolism; protoporphyrin-IX biosynthesis; 5-aminolevulinate from L-glutamyl-tRNA(Glu): step 1/2. Catalyzes the NADPH-dependent reduction of glutamyl-tRNA(Glu) to glutamate 1-semialdehyde (GSA). This is Glutamyl-tRNA reductase from Pseudomonas fluorescens (strain ATCC BAA-477 / NRRL B-23932 / Pf-5).